Here is a 131-residue protein sequence, read N- to C-terminus: Small ribosomal subunit protein uS8 (131 aa).

This sequence belongs to the universal ribosomal protein uS8 family. In terms of assembly, part of the 30S ribosomal subunit. Contacts proteins S5 and S12.

In terms of biological role, one of the primary rRNA binding proteins, it binds directly to 16S rRNA central domain where it helps coordinate assembly of the platform of the 30S subunit. The sequence is that of Small ribosomal subunit protein uS8 from Helicobacter pylori (strain P12).